A 248-amino-acid polypeptide reads, in one-letter code: Homeobox protein CHOX-CAD (248 aa).

A DNA-binding region (homeobox) is located at residues 137–196 (KDKYRVVYTDHQRLELEKEFHYSRYITIRRKAELAAALGLTERQVKIWFQNRRAKERKVN). The tract at residues 192–248 (ERKVNKKKLQQQSQPTSTTTPTPPAVGTPGPMGTLCSGSAPSLVSSSPLTIKEEFMP) is disordered. Composition is skewed to low complexity over residues 201-211 (QQQSQPTSTTT) and 228-240 (SGSAPSLVSSSPL).

This sequence belongs to the Caudal homeobox family.

It localises to the nucleus. May play an important role during the early steps of organogenesis. This is Homeobox protein CHOX-CAD (CHOX-CAD1) from Gallus gallus (Chicken).